Here is a 258-residue protein sequence, read N- to C-terminus: Small ribosomal subunit protein mS40 (258 aa).

The transit peptide at 1–35 directs the protein to the mitochondrion; the sequence is MAASVLNVLLRRLPYFSPFRGAYGVQVPLQTLCTK. Phosphoserine is present on S49. The disordered stretch occupies residues 221–258; sequence QGHLREESGPPPESMPKVPLTAPNEATSTEQAGPQSAL. Residues 244–258 show a composition bias toward polar residues; it reads NEATSTEQAGPQSAL.

The protein belongs to the bacterial ribosomal protein bS18 family. Mitochondrion-specific ribosomal protein mS40 subfamily. Component of the mitochondrial ribosome small subunit (28S) which comprises a 12S rRNA and about 30 distinct proteins.

Its subcellular location is the mitochondrion. The polypeptide is Small ribosomal subunit protein mS40 (Bos taurus (Bovine)).